A 188-amino-acid polypeptide reads, in one-letter code: MELVNITCLGLGLAADAFAVSLSSGFVIQRIKFNKALKIALFFGIFQAIMPLIGWLTGLSFREFMTNIDHWIAFILLLGIGSKMIYEAYKEMDDDDKFNPLDTYTLLALAIATSIDALAAGLGLSLLKTSILLPCTLIGLITFVLSFIGVFIGHKFGSIFNKKIEIIGGLTLIIIGSKILIEDLIKPI.

A run of 6 helical transmembrane segments spans residues 8–28 (CLGL…GFVI), 39–59 (IALF…LTGL), 68–88 (IDHW…IYEA), 106–126 (LLAL…GLSL), 131–151 (ILLP…IGVF), and 164–184 (IEII…IEDL).

It belongs to the MntP (TC 9.B.29) family.

The protein localises to the cell inner membrane. Functionally, probably functions as a manganese efflux pump. The polypeptide is Putative manganese efflux pump MntP (Crocosphaera subtropica (strain ATCC 51142 / BH68) (Cyanothece sp. (strain ATCC 51142))).